Reading from the N-terminus, the 1187-residue chain is DNA-directed RNA polymerase subunit beta (1187 aa).

It belongs to the RNA polymerase beta chain family. In terms of assembly, the RNAP catalytic core consists of 2 alpha, 1 beta, 1 beta' and 1 omega subunit. When a sigma factor is associated with the core the holoenzyme is formed, which can initiate transcription.

The catalysed reaction is RNA(n) + a ribonucleoside 5'-triphosphate = RNA(n+1) + diphosphate. Functionally, DNA-dependent RNA polymerase catalyzes the transcription of DNA into RNA using the four ribonucleoside triphosphates as substrates. This Petrotoga mobilis (strain DSM 10674 / SJ95) protein is DNA-directed RNA polymerase subunit beta.